Consider the following 314-residue polypeptide: Olfactory receptor 11H7 (314 aa).

Residues 1-24 (MNNSQISTVTQFVLLGFPGPWKIQ) are Extracellular-facing. N2 carries N-linked (GlcNAc...) asparagine glycosylation. The chain crosses the membrane as a helical span at residues 25 to 45 (IIFFSMILLVYIFTLTGNMAI). Residues 46–57 (ICAVRWDHRLHT) are Cytoplasmic-facing. Residues 58 to 78 (PMYVLLANFSFLEIWYVTCTV) traverse the membrane as a helical segment. Over 79 to 97 (PNMLVNFFSKTKTISFSGC) the chain is Extracellular. Cysteines 97 and 179 form a disulfide. The helical transmembrane segment at 98 to 118 (FTQFHFFFSLGTTECFFLCVM) threads the bilayer. Residues 119–142 (AYDRYLAICHPLHYPSIMTGQLCG) lie on the Cytoplasmic side of the membrane. A helical membrane pass occupies residues 143 to 163 (ILVSLCWLIGFLGHSISIFFI). Residues 164-201 (FQLPFCGPNIIDHFLCDVDPLMALSSAPTHIIGHVFHS) are Extracellular-facing. The chain crosses the membrane as a helical span at residues 202–222 (VSSLFINLTMVYILGSYTLVL). The Cytoplasmic portion of the chain corresponds to 223-244 (RTVLQVPSSAGWQKAISTCGSH). The chain crosses the membrane as a helical span at residues 245-265 (LVVVSLFYGAIMLMYVSPTPG). Residues 266–271 (NSVAMH) lie on the Extracellular side of the membrane. Residues 272–292 (KLITLIYSVVTPVLNPLIYSL) traverse the membrane as a helical segment. The Cytoplasmic portion of the chain corresponds to 293–314 (RNKDMKYALHHVFCGMRIIQRS).

It belongs to the G-protein coupled receptor 1 family.

It localises to the cell membrane. Functionally, odorant receptor. Activated by isovaleric acid. This is Olfactory receptor 11H7 (OR11H7) from Homo sapiens (Human).